The sequence spans 721 residues: Long-chain-fatty-acid--CoA ligase ACSBG1 (721 aa).

Residues 1-64 form a disordered region; it reads MPRGSEAGYC…SHGLELSAPE (64 aa). Positions 26 to 52 are enriched in polar residues; that stretch reads QQGASLGTSQDNSQTSSLIDGQTLSKE. Phosphoserine is present on residues serine 34, serine 50, serine 53, and serine 70. ATP is bound by residues 279 to 287, 469 to 474, aspartate 547, and arginine 562; these read TSGTTGNPK and AGYGLS. Phosphotyrosine is present on tyrosine 655. Lysine 698 is a binding site for ATP.

Belongs to the ATP-dependent AMP-binding enzyme family. Bubblegum subfamily. As to expression, mainly expressed in brain. Also expressed in adrenal gland and testis. In brain, it is present in cerebral cortical and cerebellar neurons and in steroidogenic cells of the adrenal gland, testis and ovary (at protein level).

The protein resides in the cytoplasm. It localises to the cytoplasmic vesicle. Its subcellular location is the microsome. The protein localises to the endoplasmic reticulum. It is found in the cell membrane. The catalysed reaction is a long-chain fatty acid + ATP + CoA = a long-chain fatty acyl-CoA + AMP + diphosphate. It carries out the reaction (E)-hexadec-2-enoate + ATP + CoA = (2E)-hexadecenoyl-CoA + AMP + diphosphate. The enzyme catalyses hexadecanoate + ATP + CoA = hexadecanoyl-CoA + AMP + diphosphate. Its function is as follows. Catalyzes the conversion of fatty acids such as long-chain and very long-chain fatty acids to their active form acyl-CoAs for both synthesis of cellular lipids, and degradation via beta-oxidation. Can activate diverse saturated, monosaturated and polyunsaturated fatty acids. This Mus musculus (Mouse) protein is Long-chain-fatty-acid--CoA ligase ACSBG1.